The primary structure comprises 483 residues: Glutamyl-tRNA(Gln) amidotransferase subunit A (483 aa).

Active-site charge relay system residues include K77 and S152. The active-site Acyl-ester intermediate is S176.

This sequence belongs to the amidase family. GatA subfamily. As to quaternary structure, heterotrimer of A, B and C subunits.

It carries out the reaction L-glutamyl-tRNA(Gln) + L-glutamine + ATP + H2O = L-glutaminyl-tRNA(Gln) + L-glutamate + ADP + phosphate + H(+). Allows the formation of correctly charged Gln-tRNA(Gln) through the transamidation of misacylated Glu-tRNA(Gln) in organisms which lack glutaminyl-tRNA synthetase. The reaction takes place in the presence of glutamine and ATP through an activated gamma-phospho-Glu-tRNA(Gln). This Listeria innocua serovar 6a (strain ATCC BAA-680 / CLIP 11262) protein is Glutamyl-tRNA(Gln) amidotransferase subunit A.